The primary structure comprises 287 residues: tRNA (guanine(9)-N1)-methyltransferase (287 aa).

Positions 1–27 (MSDTSDLVDGKWQRLPPVPEGMSKSQW) are disordered. One can recognise an SAM-dependent MTase TRM10-type domain in the interval 79-272 (EPRVNRDQVA…SVIPSRKLDP (194 aa)). Residues 179 to 180 (LT), Gly-199, 203 to 207 (DKNRH), Cys-211, Leu-225, and 237 to 239 (KVL) each bind S-adenosyl-L-methionine. Asp-203 (proton acceptor) is an active-site residue. Over residues 268–278 (RKLDPVKEKEQ) the composition is skewed to basic and acidic residues. Residues 268–287 (RKLDPVKEKEQQQQQQQQQQ) form a disordered region.

This sequence belongs to the class IV-like SAM-binding methyltransferase superfamily. TRM10 family. As to quaternary structure, monomer.

The protein resides in the cytoplasm. The protein localises to the nucleus. It catalyses the reaction guanosine(9) in tRNA + S-adenosyl-L-methionine = N(1)-methylguanosine(9) in tRNA + S-adenosyl-L-homocysteine + H(+). Functionally, S-adenosyl-L-methionine-dependent guanine N(1)-methyltransferase that catalyzes the formation of N(1)-methylguanine at position 9 (m1G9) in cytoplasmic tRNA. The sequence is that of tRNA (guanine(9)-N1)-methyltransferase from Candida glabrata (strain ATCC 2001 / BCRC 20586 / JCM 3761 / NBRC 0622 / NRRL Y-65 / CBS 138) (Yeast).